The sequence spans 272 residues: Type II secretion system protein C (272 aa).

Residues 1 to 16 are Cytoplasmic-facing; it reads MNISKLPPLSPSVIRR. The chain crosses the membrane as a helical span at residues 17-35; that stretch reads ILFYLLMLLFCQQLAMIFW. Residues 36–272 lie on the Periplasmic side of the membrane; sequence RIGLPDNAPV…DIYMEFGGDE (237 aa).

This sequence belongs to the GSP C family.

It is found in the cell inner membrane. Involved in a type II secretion system (T2SS, formerly general secretion pathway, GSP) for the export of proteins. Required for the translocation of the multiple pectic enzymes. This chain is Type II secretion system protein C (outC), found in Dickeya dadantii (strain 3937) (Erwinia chrysanthemi (strain 3937)).